We begin with the raw amino-acid sequence, 430 residues long: Adenylosuccinate synthetase (430 aa).

GTP contacts are provided by residues 12–18 and 40–42; these read GDEGKGK and GHT. The active-site Proton acceptor is the D13. Residues D13 and G40 each contribute to the Mg(2+) site. Residues 13 to 16, 38 to 41, T129, R143, Q223, T238, and R302 contribute to the IMP site; these read DEGK and NAGH. H41 (proton donor) is an active-site residue. 298–304 is a substrate binding site; that stretch reads TTTGRPR. Residues R304, 330-332, and 412-414 contribute to the GTP site; these read KLD and SVG.

Belongs to the adenylosuccinate synthetase family. In terms of assembly, homodimer. Mg(2+) is required as a cofactor.

Its subcellular location is the cytoplasm. It carries out the reaction IMP + L-aspartate + GTP = N(6)-(1,2-dicarboxyethyl)-AMP + GDP + phosphate + 2 H(+). The protein operates within purine metabolism; AMP biosynthesis via de novo pathway; AMP from IMP: step 1/2. Functionally, plays an important role in the de novo pathway of purine nucleotide biosynthesis. Catalyzes the first committed step in the biosynthesis of AMP from IMP. In Desulforudis audaxviator (strain MP104C), this protein is Adenylosuccinate synthetase.